Reading from the N-terminus, the 945-residue chain is Kinesin-like protein KIN-7F (945 aa).

Residues 34–356 (RILVSVRLRP…LLFASCAKEV (323 aa)) form the Kinesin motor domain. Residue 120 to 127 (GQTSSGKT) coordinates ATP. Residues 365–437 (VMSDKALVKQ…QDLLQVVGDN (73 aa)) adopt a coiled-coil conformation. Disordered regions lie at residues 484 to 512 (RRVAQREHKPQQAENNVQFTTPSRYSVSS) and 553 to 588 (NECLESSAVGSNSLQDPNAGSSMHINNDSNSSMNSR). 2 stretches are compositionally biased toward polar residues: residues 495-512 (QAENNVQFTTPSRYSVSS) and 560-587 (AVGSNSLQDPNAGSSMHINNDSNSSMNS).

The protein belongs to the TRAFAC class myosin-kinesin ATPase superfamily. Kinesin family. KIN-7 subfamily. As to quaternary structure, binds microtubules.

Its function is as follows. Binds ATP/ADP in vitro. Possesses low ATPase activity but high affinity for microtubules. The sequence is that of Kinesin-like protein KIN-7F from Oryza sativa subsp. japonica (Rice).